The primary structure comprises 218 residues: Cytochrome b6 (218 aa).

The helical transmembrane segment at I35–F55 threads the bilayer. C38 is a heme c binding site. The heme b site is built by H89 and H103. A run of 3 helical transmembrane segments spans residues A93–F113, L119–Y139, and L189–I209. H190 and H205 together coordinate heme b.

The protein belongs to the cytochrome b family. PetB subfamily. The 4 large subunits of the cytochrome b6-f complex are cytochrome b6, subunit IV (17 kDa polypeptide, PetD), cytochrome f and the Rieske protein, while the 4 small subunits are PetG, PetL, PetM and PetN. The complex functions as a dimer. Heme b is required as a cofactor. Heme c serves as cofactor.

The protein localises to the cellular thylakoid membrane. Component of the cytochrome b6-f complex, which mediates electron transfer between photosystem II (PSII) and photosystem I (PSI), cyclic electron flow around PSI, and state transitions. This chain is Cytochrome b6, found in Synechococcus sp. (strain CC9902).